The sequence spans 430 residues: Adenylosuccinate synthetase (430 aa).

Residues Gly-12–Lys-18 and Gly-40–Thr-42 contribute to the GTP site. Asp-13 (proton acceptor) is an active-site residue. Mg(2+) contacts are provided by Asp-13 and Gly-40. IMP-binding positions include Asp-13–Lys-16, Asn-38–His-41, Thr-130, Arg-144, Gln-224, Thr-239, and Arg-303. His-41 acts as the Proton donor in catalysis. Val-299–Arg-305 lines the substrate pocket. Residues Arg-305, Lys-331–Asp-333, and Ser-413–Ser-415 contribute to the GTP site.

The protein belongs to the adenylosuccinate synthetase family. Homodimer. The cofactor is Mg(2+).

Its subcellular location is the cytoplasm. It carries out the reaction IMP + L-aspartate + GTP = N(6)-(1,2-dicarboxyethyl)-AMP + GDP + phosphate + 2 H(+). The protein operates within purine metabolism; AMP biosynthesis via de novo pathway; AMP from IMP: step 1/2. Plays an important role in the de novo pathway of purine nucleotide biosynthesis. Catalyzes the first committed step in the biosynthesis of AMP from IMP. The sequence is that of Adenylosuccinate synthetase from Rhodopseudomonas palustris (strain BisB18).